The sequence spans 734 residues: MATKFPKFSQGLAQDPTTRRIWFGIATSHDFESHDGMTENNLYQKIFASHFGQLAIIFLWTSGNLFHVAWQGNFEQWIKDPLHIRPIAHAISDPHFGQPAIEAFTRSQFPGPVNIAYSGVYQWWYTIGLRTNVDLYNGSMFLLFIATLALFAGWLHLEPKYSPKVSWFKDAESRLNHHLSALFGLSSLAWSGHLIHVAIPESRGIHVRWDNFLSQLPHPSGLEPFFKGNWSLYSENPDSLTHVFGTASGAGTAVLTFLGGFHPETKSLWLTDIAHHHLAIAVLFIVAGHMYRTNFAIGHRIDDILNAHKAPSGKLGLGHFGLYETINNSLHFQLGLALASLGVITSLVAQHMYSLSPYAFLIQDRTTMAALYTHHQYIAGFIMTGAFAHGAIFFIRDFDEEKNKGNVLSRILDHKEAIISHLSWVTLFLGFHTLGLYVHNDVMQAFGTPEKQILIEPVFAQWIQSAHGKNIYELNILLSSDSSNAFSASQAIWLPGWLNGINDKSTSLFLQIGPGDFLVHHAIALGLHTTTLILVKGALDARGSRLMPDKKDFGYSFPCDGPGRGGTCDISAWDAFYLAVFWMLNTIGWTTFYWHWKHITLWQGNVGQFNESSTYLMGWLRDYLWLNSSQLINGYNPFGMNSLAVWGWMFLFGHLVWATGFMFLISWRGYWQELIETLVWAHERTPITNVFKWTDKPVALSIVQARLVGLAHFSVGYVFTYAAFLIASTSAKFG.

8 consecutive transmembrane segments (helical) span residues 46-69 (IFAS…FHVA), 135-158 (LYNG…LHLE), 175-199 (LNHH…HVAI), 273-291 (IAHH…GHMY), 330-353 (LHFQ…QHMY), 369-395 (AALY…IFFI), 417-439 (AIIS…LYVH), and 517-535 (FLVH…LILV). Cys559 and Cys568 together coordinate [4Fe-4S] cluster. 2 consecutive transmembrane segments (helical) span residues 575–596 (AFYL…YWHW) and 643–665 (LAVW…MFLI). Residues His654, Met662, and Tyr670 each contribute to the chlorophyll a site. Trp671 is a phylloquinone binding site. The helical transmembrane segment at 707–727 (LVGLAHFSVGYVFTYAAFLIA) threads the bilayer.

The protein belongs to the PsaA/PsaB family. In terms of assembly, the PsaA/B heterodimer binds the P700 chlorophyll special pair and subsequent electron acceptors. PSI consists of a core antenna complex that captures photons, and an electron transfer chain that converts photonic excitation into a charge separation. The eukaryotic PSI reaction center is composed of at least 11 subunits. P700 is a chlorophyll a/chlorophyll a' dimer, A0 is one or more chlorophyll a, A1 is one or both phylloquinones and FX is a shared 4Fe-4S iron-sulfur center. is required as a cofactor.

It is found in the plastid. It localises to the chloroplast thylakoid membrane. It carries out the reaction reduced [plastocyanin] + hnu + oxidized [2Fe-2S]-[ferredoxin] = oxidized [plastocyanin] + reduced [2Fe-2S]-[ferredoxin]. PsaA and PsaB bind P700, the primary electron donor of photosystem I (PSI), as well as the electron acceptors A0, A1 and FX. PSI is a plastocyanin/cytochrome c6-ferredoxin oxidoreductase, converting photonic excitation into a charge separation, which transfers an electron from the donor P700 chlorophyll pair to the spectroscopically characterized acceptors A0, A1, FX, FA and FB in turn. Oxidized P700 is reduced on the lumenal side of the thylakoid membrane by plastocyanin or cytochrome c6. The protein is Photosystem I P700 chlorophyll a apoprotein A2 of Euglena gracilis.